The following is a 469-amino-acid chain: Neuraminidase (469 aa).

At Met1 to Thr9 the chain is on the intravirion side. A helical transmembrane segment spans residues Ile10–Val30. The segment at Gly11 to Val33 is involved in apical transport and lipid raft association. The Virion surface segment spans residues Thr31 to Ile469. The hypervariable stalk region stretch occupies residues His36–Ser88. N-linked (GlcNAc...) asparagine; by host glycans are attached at residues Asn61, Asn70, and Asn86. Residues Gln91–Ile469 form a head of neuraminidase region. 8 disulfides stabilise this stretch: Cys92/Cys417, Cys124/Cys129, Cys183/Cys230, Cys232/Cys237, Cys278/Cys291, Cys280/Cys289, Cys318/Cys337, and Cys421/Cys447. A substrate-binding site is contributed by Arg118. The N-linked (GlcNAc...) asparagine; by host glycan is linked to Asn146. Asp151 (proton donor/acceptor) is an active-site residue. Arg152 provides a ligand contact to substrate. Asn200 and Asn234 each carry an N-linked (GlcNAc...) asparagine; by host glycan. Position 276–277 (Glu276–Glu277) interacts with substrate. Arg292 contributes to the substrate binding site. 3 residues coordinate Ca(2+): Asp293, Gly297, and Asp324. Arg371 provides a ligand contact to substrate. Tyr406 acts as the Nucleophile in catalysis.

Belongs to the glycosyl hydrolase 34 family. As to quaternary structure, homotetramer. It depends on Ca(2+) as a cofactor. N-glycosylated.

It localises to the virion membrane. Its subcellular location is the host apical cell membrane. The enzyme catalyses Hydrolysis of alpha-(2-&gt;3)-, alpha-(2-&gt;6)-, alpha-(2-&gt;8)- glycosidic linkages of terminal sialic acid residues in oligosaccharides, glycoproteins, glycolipids, colominic acid and synthetic substrates.. With respect to regulation, inhibited by the neuraminidase inhibitors zanamivir (Relenza) and oseltamivir (Tamiflu). These drugs interfere with the release of progeny virus from infected cells and are effective against all influenza strains. Resistance to neuraminidase inhibitors is quite rare. Its function is as follows. Catalyzes the removal of terminal sialic acid residues from viral and cellular glycoconjugates. Cleaves off the terminal sialic acids on the glycosylated HA during virus budding to facilitate virus release. Additionally helps virus spread through the circulation by further removing sialic acids from the cell surface. These cleavages prevent self-aggregation and ensure the efficient spread of the progeny virus from cell to cell. Otherwise, infection would be limited to one round of replication. Described as a receptor-destroying enzyme because it cleaves a terminal sialic acid from the cellular receptors. May facilitate viral invasion of the upper airways by cleaving the sialic acid moieties on the mucin of the airway epithelial cells. Likely to plays a role in the budding process through its association with lipid rafts during intracellular transport. May additionally display a raft-association independent effect on budding. Plays a role in the determination of host range restriction on replication and virulence. Sialidase activity in late endosome/lysosome traffic seems to enhance virus replication. This chain is Neuraminidase, found in Aves (whales).